A 132-amino-acid chain; its full sequence is Fatty acid-binding protein 1 (132 aa).

An N-acetylalanine modification is found at Ala2.

It belongs to the calycin superfamily. Fatty-acid binding protein (FABP) family.

The chain is Fatty acid-binding protein 1 (FABP-1) from Fasciola gigantica (Giant liver fluke).